Consider the following 274-residue polypeptide: S-methyl-5'-thioadenosine phosphorylase (274 aa).

Residues serine 20, 62–63, and 95–96 contribute to the phosphate site; these read RH and SA. Substrate is bound at residue methionine 194. A phosphate-binding site is contributed by threonine 195. 218–220 contributes to the substrate binding site; that stretch reads DYD.

Belongs to the PNP/MTAP phosphorylase family. MTAP subfamily. Homohexamer. Dimer of a homotrimer.

It catalyses the reaction S-methyl-5'-thioadenosine + phosphate = 5-(methylsulfanyl)-alpha-D-ribose 1-phosphate + adenine. It functions in the pathway amino-acid biosynthesis; L-methionine biosynthesis via salvage pathway; S-methyl-5-thio-alpha-D-ribose 1-phosphate from S-methyl-5'-thioadenosine (phosphorylase route): step 1/1. Catalyzes the reversible phosphorylation of S-methyl-5'-thioadenosine (MTA) to adenine and 5-methylthioribose-1-phosphate. Involved in the breakdown of MTA, a major by-product of polyamine biosynthesis. Responsible for the first step in the methionine salvage pathway after MTA has been generated from S-adenosylmethionine. Has broad substrate specificity with 6-aminopurine nucleosides as preferred substrates. The sequence is that of S-methyl-5'-thioadenosine phosphorylase from Hyperthermus butylicus (strain DSM 5456 / JCM 9403 / PLM1-5).